The sequence spans 406 residues: MQEGIEVRVQEAMREIARGVNEIIGIEYIQSLVERYYKSGETFSIKAGFDPTAPDLHLGHTVLIQKMATFQKHGAIVTFLIGDYTAMIGDPTGKSETRKPLTREQVLQNAQSYQDQVFKILDPQKTVIRFNSEWLEKLGTAGMIELTAKFSVARMLERDDFEKRYKSQTPISLVEFIYPLLQGYDSVALESDVEFGGTDQKFNLLMGRHLQRSYGLKKEQSVLMVPILEGLDGVQKMSKSLGNYIGVTEEPNTMYAKVLSVSDELMWRYYELLSAKSLDEIHKLQEDVKSGNYHPKKAKEDLALEITTRYHSEQDALQAKEEFDKVFARDEIPSEMPELGVTGEIWICKAMVEGGISPSTSQARRDIQAGSVKINQTKVEDINQQLGHGEHIIQVGKRKFLRLIVK.

Positions 51–60 (PTAPDLHLGH) match the 'HIGH' region motif. The short motif at 236-240 (KMSKS) is the 'KMSKS' region element. Residue lysine 239 coordinates ATP. The 61-residue stretch at 345 to 405 (IWICKAMVEG…GKRKFLRLIV (61 aa)) folds into the S4 RNA-binding domain.

It belongs to the class-I aminoacyl-tRNA synthetase family. TyrS type 2 subfamily. As to quaternary structure, homodimer.

It localises to the cytoplasm. The catalysed reaction is tRNA(Tyr) + L-tyrosine + ATP = L-tyrosyl-tRNA(Tyr) + AMP + diphosphate + H(+). Functionally, catalyzes the attachment of tyrosine to tRNA(Tyr) in a two-step reaction: tyrosine is first activated by ATP to form Tyr-AMP and then transferred to the acceptor end of tRNA(Tyr). The polypeptide is Tyrosine--tRNA ligase (Wolinella succinogenes (strain ATCC 29543 / DSM 1740 / CCUG 13145 / JCM 31913 / LMG 7466 / NCTC 11488 / FDC 602W) (Vibrio succinogenes)).